The sequence spans 172 residues: Ribosome maturation factor RimM (172 aa).

One can recognise a PRC barrel domain in the interval Asp96–Leu168.

It belongs to the RimM family. As to quaternary structure, binds ribosomal protein uS19.

Its subcellular location is the cytoplasm. Its function is as follows. An accessory protein needed during the final step in the assembly of 30S ribosomal subunit, possibly for assembly of the head region. Essential for efficient processing of 16S rRNA. May be needed both before and after RbfA during the maturation of 16S rRNA. It has affinity for free ribosomal 30S subunits but not for 70S ribosomes. The sequence is that of Ribosome maturation factor RimM from Streptococcus mutans serotype c (strain ATCC 700610 / UA159).